Here is a 70-residue protein sequence, read N- to C-terminus: Small ribosomal subunit protein bS21B (70 aa).

It belongs to the bacterial ribosomal protein bS21 family.

The chain is Small ribosomal subunit protein bS21B (rpsU2) from Rhizobium meliloti (strain 1021) (Ensifer meliloti).